The chain runs to 338 residues: uncharacterized protein (338 aa).

The first 29 residues, methionine 1 to alanine 29, serve as a signal peptide directing secretion.

It belongs to the aerolysin family.

This is an uncharacterized protein from Staphylococcus aureus (strain bovine RF122 / ET3-1).